A 577-amino-acid polypeptide reads, in one-letter code: Arginine--tRNA ligase (577 aa).

The short motif at Pro-122–His-132 is the 'HIGH' region element.

It belongs to the class-I aminoacyl-tRNA synthetase family. Monomer.

It is found in the cytoplasm. The catalysed reaction is tRNA(Arg) + L-arginine + ATP = L-arginyl-tRNA(Arg) + AMP + diphosphate. This Salmonella typhimurium (strain SL1344) protein is Arginine--tRNA ligase (argS).